The primary structure comprises 438 residues: Indole diterpene prenyltransferase janD (438 aa).

80–81 (FM) provides a ligand contact to L-tryptophan. Substrate is bound by residues Arg102, Lys190, Arg264, Lys266, Tyr268, Tyr350, Tyr414, and Tyr418.

This sequence belongs to the tryptophan dimethylallyltransferase family.

It functions in the pathway secondary metabolite biosynthesis. Functionally, indole diterpene prenyltransferase; part of the gene cluster that mediates the biosynthesis of the indole diterpenes janthitremanes such as shearinine K or shearinine A. The geranylgeranyl diphosphate (GGPP) synthase janG catalyzes the first step in janthitremane biosynthesis via conversion of farnesyl pyrophosphate and isopentyl pyrophosphate into geranylgeranyl pyrophosphate (GGPP). Condensation of indole-3-glycerol phosphate with GGPP by the prenyl transferase janC then forms 3-geranylgeranylindole (3-GGI). Epoxidation by the FAD-dependent monooxygenase janM leads to a epoxidized-GGI that is substrate of the terpene cyclase janB for cyclization to yield paspaline. Paspaline is subsequently converted to 13-desoxypaspaline by the cytochrome P450 monooxygenase janP, via beta-PC-M6 in a series of alpha-face oxidations. The cytochrome P450 monooxygenase janQ is proposed to carry out sequential beta-face oxidation steps at C-7 and C-13 of 13-desoxypaspaline to form paspalicine and paspalinine respectively. The indole diterpene prenyltransferase janD may then convert paspalinine into shearinine K which is substrate of janO and/or additional enzymes for oxidation and cyclization to generate shearinine A. This chain is Indole diterpene prenyltransferase janD, found in Penicillium janthinellum (Penicillium vitale).